The sequence spans 1265 residues: Cohesin subunit SA-1 (1265 aa).

Positions 1–16 (MITSELSVLQDSTNES) are enriched in polar residues. Disordered regions lie at residues 1 to 21 (MITS…VMHT) and 37 to 91 (DLEV…EGDP). A compositionally biased stretch (basic and acidic residues) spans 62-73 (TPGDRSRAEPGS). The SCD domain maps to 303–388 (FVHRYRDAIA…NRFKDRIVSM (86 aa)). 2 disordered regions span residues 1063 to 1097 (GDED…KRVI) and 1111 to 1130 (DTIQ…TVLR). A compositionally biased stretch (low complexity) spans 1069–1082 (SVNSGGSNSKGSSV). Residues 1083-1095 (RSKKGRPPLHKKR) are compositionally biased toward basic residues. Polar residues predominate over residues 1111-1129 (DTIQTPGALTTPQLTSTVL).

This sequence belongs to the SCC3 family. Interacts directly with RAD21 in cohesin complex. Cohesin complexes are composed of a heterodimer between and SMC3, which are attached via their hinge domain, and RAD21 which link them at their heads, and one STAG protein (STAG1 OR STAG2). In cohesin complexes, STAG1 is mutually exclusive with STAG2. In terms of processing, phosphorylated by PLK1. The large dissociation of cohesin from chromosome arms during prophase is partly due to its phosphorylation.

The protein localises to the nucleus. Its subcellular location is the chromosome. It is found in the centromere. Functionally, component of cohesin complex, a complex required for the cohesion of sister chromatids after DNA replication. The cohesin complex apparently forms a large proteinaceous ring within which sister chromatids can be trapped. At anaphase, the complex is cleaved and dissociates from chromatin, allowing sister chromatids to segregate. The cohesin complex may also play a role in spindle pole assembly during mitosis. The chain is Cohesin subunit SA-1 (stag1) from Xenopus laevis (African clawed frog).